Consider the following 93-residue polypeptide: Large ribosomal subunit protein uL23 (93 aa).

Belongs to the universal ribosomal protein uL23 family. Part of the 50S ribosomal subunit. Contacts protein L29, and trigger factor when it is bound to the ribosome.

In terms of biological role, one of the early assembly proteins it binds 23S rRNA. One of the proteins that surrounds the polypeptide exit tunnel on the outside of the ribosome. Forms the main docking site for trigger factor binding to the ribosome. This chain is Large ribosomal subunit protein uL23, found in Campylobacter hominis (strain ATCC BAA-381 / DSM 21671 / CCUG 45161 / LMG 19568 / NCTC 13146 / CH001A).